We begin with the raw amino-acid sequence, 1029 residues long: Protein SUPPRESSOR OF PHYA-105 1 (1029 aa).

Residues 42–69 (SETANSDCPGSSAHRNVDLTKPPPPEEA) form a disordered region. One can recognise a Protein kinase domain in the interval 188 to 529 (VQMKTPVSSS…ARDILKSELI (342 aa)). ATP-binding positions include 194–202 (VSSSNFSQL) and Lys-216. Positions 213-269 (VVGKNQETPPEFVSDQDLGSKEKKLDISKSPTPHDVLPLKSSPKGNGMVSHGDGNHS) are disordered. The segment covering 230-239 (LGSKEKKLDI) has biased composition (basic and acidic residues). The active-site Proton acceptor is Asp-316. Residues 347 to 392 (EDLNRRRPVVEESSSGGRDSKKRKMDLHLNSPGNQLQATSTGRPFK) are disordered. Over residues 377 to 388 (SPGNQLQATSTG) the composition is skewed to polar residues. A coiled-coil region spans residues 557–589 (VQKKKKASKLLQDIQTLEDDIKEAERRYSSNVS). The interval 653–679 (ARSDKTLKDRDRCSENQNENQDMSTKG) is disordered. Residues 654–666 (RSDKTLKDRDRCS) show a composition bias toward basic and acidic residues. Positions 667 to 679 (ENQNENQDMSTKG) are enriched in polar residues. WD repeat units follow at residues 714-753 (NSAS…NESV), 763-803 (VNKS…GFSQ), 806-846 (EHQK…SLGT), 848-888 (WSPA…TPWC), 892-930 (GHEK…SSGL), 932-971 (PGAC…YSYY), and 997-1029 (DNGQ…LKLV). The DWD box signature appears at 866 to 881 (LAFGSADYKVYCYDLR).

Interacts with CO, COP1, HFR1, HY5 and PHYA. Light induces dissociation of the SPA1/COP1 complex. Binds to CRY1 in response to blue light, this interaction prevents SPA1/COP1 complex formation but stimulate CRY2/COP1 complex, and thus avoid COP1-dependent degradation of the transcription factor HY5 by the proteasome and promotes hypocotyl elongation.

The protein localises to the nucleus speckle. Its subcellular location is the nucleus. It is found in the PML body. In terms of biological role, controls normal photoperiodic flowering and regulates circadian rhythms. Required for suppression of photomorphogenesis in dark-grown seedlings and for normal elongation growth of adult plants. Integral component of the COP1/SPA E3 ubiquitin-protein ligase complex. Involved in HY5, HFR1, LAF1 and CO degradation. The polypeptide is Protein SUPPRESSOR OF PHYA-105 1 (SPA1) (Arabidopsis thaliana (Mouse-ear cress)).